The sequence spans 226 residues: Large ribosomal subunit protein uL3 (226 aa).

The tract at residues 135–158 (MSSQRASHGNSRSHNVPGSIGMAQ) is disordered. Residues 137–150 (SQRASHGNSRSHNV) are compositionally biased toward polar residues. Residue Gln158 is modified to N5-methylglutamine.

This sequence belongs to the universal ribosomal protein uL3 family. In terms of assembly, part of the 50S ribosomal subunit. Forms a cluster with proteins L14 and L19. Post-translationally, methylated by PrmB.

One of the primary rRNA binding proteins, it binds directly near the 3'-end of the 23S rRNA, where it nucleates assembly of the 50S subunit. The protein is Large ribosomal subunit protein uL3 of Polaromonas naphthalenivorans (strain CJ2).